We begin with the raw amino-acid sequence, 119 residues long: Large ribosomal subunit protein bL19 (119 aa).

It belongs to the bacterial ribosomal protein bL19 family.

In terms of biological role, this protein is located at the 30S-50S ribosomal subunit interface and may play a role in the structure and function of the aminoacyl-tRNA binding site. The chain is Large ribosomal subunit protein bL19 from Leuconostoc mesenteroides subsp. mesenteroides (strain ATCC 8293 / DSM 20343 / BCRC 11652 / CCM 1803 / JCM 6124 / NCDO 523 / NBRC 100496 / NCIMB 8023 / NCTC 12954 / NRRL B-1118 / 37Y).